The chain runs to 315 residues: Aspartate carbamoyltransferase catalytic subunit (315 aa).

Carbamoyl phosphate-binding residues include Arg-65 and Thr-66. Lys-93 is an L-aspartate binding site. Residues Arg-115, His-143, and Gln-146 each coordinate carbamoyl phosphate. 2 residues coordinate L-aspartate: Arg-176 and Arg-231. 2 residues coordinate carbamoyl phosphate: Gly-272 and Pro-273.

The protein belongs to the aspartate/ornithine carbamoyltransferase superfamily. ATCase family. Heterododecamer (2C3:3R2) of six catalytic PyrB chains organized as two trimers (C3), and six regulatory PyrI chains organized as three dimers (R2).

It catalyses the reaction carbamoyl phosphate + L-aspartate = N-carbamoyl-L-aspartate + phosphate + H(+). It participates in pyrimidine metabolism; UMP biosynthesis via de novo pathway; (S)-dihydroorotate from bicarbonate: step 2/3. Its function is as follows. Catalyzes the condensation of carbamoyl phosphate and aspartate to form carbamoyl aspartate and inorganic phosphate, the committed step in the de novo pyrimidine nucleotide biosynthesis pathway. The protein is Aspartate carbamoyltransferase catalytic subunit of Hyphomonas neptunium (strain ATCC 15444).